The chain runs to 888 residues: C2H2 zinc finger transcription factor sltA (888 aa).

Disordered regions lie at residues 1-78 (MSTS…QRSP), 132-176 (IDSQ…SSEN), and 388-407 (RSSMPSNREPAQNGAKASAP). Composition is skewed to polar residues over residues 23 to 32 (PSLSASTSIE), 167 to 176 (GLGTSLSSEN), and 388 to 397 (RSSMPSNREP). C2H2-type zinc fingers lie at residues 500 to 522 (QKCKDCDKVFKRPCDLTKHEKTH) and 561 to 586 (YKCKFAPCTYSSKRESNCKQHMEKAH). The segment at 589-663 (DYVRSKHNGR…PTQTGSGDFP (75 aa)) is disordered. A compositionally biased stretch (polar residues) spans 602-632 (KASNGATPQTPSIATPSSKAQGITTPLTGSE).

It is found in the nucleus. Its function is as follows. Transcription factor that contributes to azole resistance by coregulating the expression of the drug target erg11A and the drug efflux pump mdr1. Binds to the 5'-AGGCA-3' motif in the promoters of ergosterol biosynthesis and drug pump genes to regulate their expression. Is able to interact with the promoters of sltA, sltB, erg11A, erg13A, erg24A, mdr1, abcE and mfsC. Involved in antifungal drug resistance to azoles, terbinafine, and simvastatin but not amphotericin B or caspofungin. This chain is C2H2 zinc finger transcription factor sltA, found in Aspergillus fumigatus (strain CBS 144.89 / FGSC A1163 / CEA10) (Neosartorya fumigata).